We begin with the raw amino-acid sequence, 177 residues long: UPF0177 protein YxdF (177 aa).

The next 4 helical transmembrane spans lie at 2 to 22 (TLVL…KNTL), 30 to 50 (IFWL…VTVL), 117 to 137 (ALVH…SFII), and 152 to 172 (IVHS…DTFF).

It belongs to the UPF0177 family.

It localises to the cell membrane. The polypeptide is UPF0177 protein YxdF (yxdF) (Lactococcus lactis subsp. lactis (strain IL1403) (Streptococcus lactis)).